The sequence spans 700 residues: Autophagy-related protein 13 (700 aa).

The segment at 319 to 352 (GSINSSSSPPPGATQSNQSVSSFSTSKPIPVTLN) is disordered. A compositionally biased stretch (low complexity) spans 332–344 (TQSNQSVSSFSTS). An ATG17-binding region spans residues 399 to 407 (SSFGSRFRT). An ATG1-binding region spans residues 428–487 (TPNNPILHNFRSRNKSPSVSSTELGPSSSIYMDDDLDSFMKMLDSKPDLRFPSNSPSVYE). A compositionally biased stretch (polar residues) spans 506 to 532 (EQQQHGSPSSNQIMIHSQSQTSQSQVF). Disordered regions lie at residues 506–562 (EQQQ…PGVS), 576–637 (HASS…NPEL), and 649–700 (ESDD…NQEF). Residues 595–631 (SSPPASATAVATVHNSLRRLTSSSQRTNTNSTNSSTR) are compositionally biased toward low complexity. Over residues 656–667 (DEHSPRSTDTKS) the composition is skewed to basic and acidic residues.

This sequence belongs to the ATG13 family. Fungi subfamily. In terms of assembly, hypophosphorylated form interacts with ATG1 to form the ATG1-ATG13 kinase complex. The ATG1-ATG13 complex interacts with the ATG17-ATG29-ATG31 complex through direct interaction with ATG17. Interacts with VAC8.

Its subcellular location is the cytoplasm. It is found in the preautophagosomal structure. Functionally, activates the ATG1 kinase in a nutritional condition dependent manner through the TOR pathway, leading to autophagy. Involved in ATG9 and ATG23 cycling through the pre-autophagosomal structure. Also involved in cytoplasm to vacuole transport (Cvt) and more specifically in Cvt vesicle formation. Seems to play a role in the switching machinery regulating the conversion between the Cvt pathway and autophagy. Finally, ATG13 is also required for glycogen storage during stationary phase. Its function is as follows. Acts as a negative regulator of xylose alcoholic fermentation, a role that is not related to autophagy. The polypeptide is Autophagy-related protein 13 (Ogataea parapolymorpha (strain ATCC 26012 / BCRC 20466 / JCM 22074 / NRRL Y-7560 / DL-1) (Yeast)).